A 98-amino-acid chain; its full sequence is Large ribosomal subunit protein eL14 (98 aa).

This sequence belongs to the eukaryotic ribosomal protein eL14 family.

This is Large ribosomal subunit protein eL14 from Thermofilum pendens (strain DSM 2475 / Hrk 5).